A 518-amino-acid chain; its full sequence is MALMRCLLPPGFYRTLYHPWTRCASSGTLQIKDPLNFWCGARVDLKDVKTKSEPVFEPATGRVLCRLQTCGSAEVDAAVRNASAAFKVWRKLSGMERARVMLEAARLIEKRREEIAEMEVINNGKSITEARLDVDSARLSIEYFAGQATTLSGQHVQLPGGSFAYTRREPFGVCVGIGAWNYPFQIAAWKSAPAIACGNSMVFKPSPLTPVTAVLLAEIYRQAGAPEGLFNVVQGGQETGSLLCLHPSVEKVSFTGSVPTGKKIMEMASRGVKAVTLELGGKSPLIIFEDTDLENAVRGALMANFLSQGQVCSNGTRVFVQSSIVPQFLKEVVRRTKAISIGDPLLDETRMGALVSKAHLDKVLRYVEQAKNEGAQVLCGGEPFSPADPKLKDGYYMTPCVLDSCTDDMTCVKEEIFGPVMSVLTFDTEDEVLRRANDSDLGLAAGVFTKDVKRAHRVIENLQAGSCFINNYNITPVEVPFGGFKASGIGRENGQVTIEFYSQLKTVVVEMGDVDSLF.

Residues K204 and 256–260 (GSVPT) contribute to the NAD(+) site. The active-site Proton acceptor is the E278. The active-site Nucleophile is the C312. E415 contacts NAD(+).

The protein belongs to the aldehyde dehydrogenase family. In terms of assembly, homotetramer.

The protein localises to the cytoplasm. Its subcellular location is the cytosol. The enzyme catalyses 4-(trimethylamino)butanal + NAD(+) + H2O = 4-(trimethylamino)butanoate + NADH + 2 H(+). It carries out the reaction an aldehyde + NAD(+) + H2O = a carboxylate + NADH + 2 H(+). The protein operates within amine and polyamine biosynthesis; carnitine biosynthesis. Its function is as follows. Converts gamma-trimethylaminobutyraldehyde into gamma-butyrobetaine with high efficiency (in vitro). Can catalyze the irreversible oxidation of a broad range of aldehydes to the corresponding acids in an NAD-dependent reaction, but with low efficiency. This chain is 4-trimethylaminobutyraldehyde dehydrogenase B (aldh9a1b), found in Danio rerio (Zebrafish).